The primary structure comprises 491 residues: Carboxypeptidase SOL1 (491 aa).

An N-terminal signal peptide occupies residues 1 to 25 (MSKLRFFQSLLISTVICFFLPSINA). Residues 26–452 (RGGHSDHIHP…LLTQFFTETN (427 aa)) lie on the Extracellular side of the membrane. An N-linked (GlcNAc...) asparagine glycan is attached at asparagine 39. The Peptidase M14 domain occupies 64 to 338 (GYMTNDDLEK…KSMLNLVASL (275 aa)). Histidine 125 and glutamate 128 together coordinate Zn(2+). Substrate is bound by residues 125 to 128 (HGDE) and 186 to 187 (NR). Histidine 226 contacts Zn(2+). An N-linked (GlcNAc...) asparagine glycan is attached at asparagine 268. Substrate is bound at residue tyrosine 286. Glutamate 308 serves as the catalytic Proton donor/acceptor. The helical transmembrane segment at 453-470 (NGITLTLFVVVVFLCFLL) threads the bilayer. The Cytoplasmic portion of the chain corresponds to 471-491 (QRRVRFNLWKQRQSSRRSITV).

This sequence belongs to the peptidase M14 family. Requires Zn(2+) as cofactor. Expressed in roots, shoots, leaves, flowers and siliques.

The protein resides in the endosome membrane. Its function is as follows. Possesses in vitro carboxypeptidase activity against the C-terminal arginine and lysine residues. Involved in the maturation of CLE19. Removes the C-terminal arginine residue of CLE19 proprotein. The cleavage of the C-terminal arginine residue is necessary for CLE19 activity in vivo. Is not involved in generating active CLV3. Is not involved in CLE19 or CLV3 perception. In Arabidopsis thaliana (Mouse-ear cress), this protein is Carboxypeptidase SOL1.